The following is a 134-amino-acid chain: Calcitonin gene-related peptide 2 (134 aa).

Residues 1-26 (MDFWKFFPFLALSSMWVLCLASSLQA) form the signal peptide. Residues 27 to 86 (APFRSALESSLDLGTLSDQEKHLLLAALIQDYEQKARKLEQEEQETEGSRKGSSSSVISQ) constitute a propeptide that is removed on maturation. The interval 65–91 (LEQEEQETEGSRKGSSSSVISQKRSCN) is disordered. The span at 77–89 (KGSSSSVISQKRS) shows a compositional bias: low complexity. A disulfide bridge links cysteine 90 with cysteine 95. Phenylalanine 125 is subject to Phenylalanine amide. A propeptide spanning residues 131–134 (DLRV) is cleaved from the precursor.

The protein belongs to the calcitonin family.

Its subcellular location is the secreted. CALCB/CGRP2 is a peptide hormone that induces vasodilation mediated by the CALCRL-RAMP1 receptor complex. Dilates a variety of vessels including the coronary, cerebral and systemic vasculature. Its abundance in the CNS also points toward a neurotransmitter or neuromodulator role. This Rattus norvegicus (Rat) protein is Calcitonin gene-related peptide 2.